The following is a 160-amino-acid chain: Inorganic pyrophosphatase (160 aa).

Lysine 16, arginine 28, and tyrosine 40 together coordinate substrate. 3 residues coordinate Mg(2+): aspartate 50, aspartate 55, and aspartate 87. Residue tyrosine 126 participates in substrate binding.

The protein belongs to the PPase family. In terms of assembly, homohexamer. Mg(2+) serves as cofactor.

It localises to the cytoplasm. It carries out the reaction diphosphate + H2O = 2 phosphate + H(+). Its function is as follows. Catalyzes the hydrolysis of inorganic pyrophosphate (PPi) forming two phosphate ions. This Nanoarchaeum equitans (strain Kin4-M) protein is Inorganic pyrophosphatase.